We begin with the raw amino-acid sequence, 279 residues long: Ribonuclease Z (279 aa).

H61, H63, D65, H66, H153, D176, and H240 together coordinate Zn(2+). D65 (proton acceptor) is an active-site residue.

The protein belongs to the RNase Z family. Homodimer. Zn(2+) serves as cofactor.

The enzyme catalyses Endonucleolytic cleavage of RNA, removing extra 3' nucleotides from tRNA precursor, generating 3' termini of tRNAs. A 3'-hydroxy group is left at the tRNA terminus and a 5'-phosphoryl group is left at the trailer molecule.. In terms of biological role, zinc phosphodiesterase, which displays some tRNA 3'-processing endonuclease activity. Probably involved in tRNA maturation, by removing a 3'-trailer from precursor tRNA. The sequence is that of Ribonuclease Z from Mycobacterium marinum (strain ATCC BAA-535 / M).